The sequence spans 135 residues: Small ribosomal subunit protein uS11 (135 aa).

Positions 1–26 (MPPKSRTAGGARKTRRKEKKNVSHGH) are disordered. Over residues 12-23 (RKTRRKEKKNVS) the composition is skewed to basic residues.

This sequence belongs to the universal ribosomal protein uS11 family. In terms of assembly, part of the 30S ribosomal subunit. Interacts with proteins S7 and S18. Binds to IF-3.

Located on the platform of the 30S subunit, it bridges several disparate RNA helices of the 16S rRNA. Forms part of the Shine-Dalgarno cleft in the 70S ribosome. This chain is Small ribosomal subunit protein uS11, found in Beutenbergia cavernae (strain ATCC BAA-8 / DSM 12333 / CCUG 43141 / JCM 11478 / NBRC 16432 / NCIMB 13614 / HKI 0122).